The primary structure comprises 434 residues: Nicotinate phosphoribosyltransferase (434 aa).

At histidine 242 the chain carries Phosphohistidine; by autocatalysis.

It belongs to the NAPRTase family. Transiently phosphorylated on a His residue during the reaction cycle. Phosphorylation strongly increases the affinity for substrates and increases the rate of nicotinate D-ribonucleotide production. Dephosphorylation regenerates the low-affinity form of the enzyme, leading to product release.

It catalyses the reaction nicotinate + 5-phospho-alpha-D-ribose 1-diphosphate + ATP + H2O = nicotinate beta-D-ribonucleotide + ADP + phosphate + diphosphate. Its pathway is cofactor biosynthesis; NAD(+) biosynthesis; nicotinate D-ribonucleotide from nicotinate: step 1/1. Functionally, catalyzes the synthesis of beta-nicotinate D-ribonucleotide from nicotinate and 5-phospho-D-ribose 1-phosphate at the expense of ATP. This chain is Nicotinate phosphoribosyltransferase, found in Mesorhizobium japonicum (strain LMG 29417 / CECT 9101 / MAFF 303099) (Mesorhizobium loti (strain MAFF 303099)).